The primary structure comprises 250 residues: L-ascorbate peroxidase 1, cytosolic (250 aa).

The active-site Proton acceptor is the H42. The tract at residues 113-137 (VPFHPGREDKPAPPPEGRLPDATKG) is disordered. H163 provides a ligand contact to heme b. T164, T180, N182, and D187 together coordinate K(+).

Belongs to the peroxidase family. Ascorbate peroxidase subfamily. The cofactor is heme b.

The protein localises to the cytoplasm. The enzyme catalyses L-ascorbate + H2O2 = L-dehydroascorbate + 2 H2O. In terms of biological role, plays a key role in hydrogen peroxide removal. The chain is L-ascorbate peroxidase 1, cytosolic (APX1) from Oryza sativa subsp. indica (Rice).